We begin with the raw amino-acid sequence, 148 residues long: Putative adenylate kinase (148 aa).

ATP-binding residues include G9, G11, K12, S13, and T14. The NMP stretch occupies residues E28 to V44. Residues D91–E101 are LID. Residue R92 participates in ATP binding.

It belongs to the adenylate kinase family. AK6 subfamily. In terms of assembly, interacts with uS11. Not a structural component of 40S pre-ribosomes, but transiently interacts with them by binding to uS11.

It carries out the reaction AMP + ATP = 2 ADP. It catalyses the reaction ATP + H2O = ADP + phosphate + H(+). Its function is as follows. Broad-specificity nucleoside monophosphate (NMP) kinase that catalyzes the reversible transfer of the terminal phosphate group between nucleoside triphosphates and monophosphates. Also has ATPase activity. Involved in the late maturation steps of the 30S ribosomal particles, specifically 16S rRNA maturation. While NMP activity is not required for ribosome maturation, ATPase activity is. Associates transiently with small ribosomal subunit protein uS11. ATP hydrolysis breaks the interaction with uS11. May temporarily remove uS11 from the ribosome to enable a conformational change of the ribosomal RNA that is needed for the final maturation step of the small ribosomal subunit. This is Putative adenylate kinase from Thermoplasma acidophilum (strain ATCC 25905 / DSM 1728 / JCM 9062 / NBRC 15155 / AMRC-C165).